The following is a 396-amino-acid chain: Phosphoglycerate kinase (396 aa).

Substrate is bound by residues 21–23 (DLN), Arg-36, 59–62 (HLGR), Arg-113, and Arg-146. ATP contacts are provided by residues Lys-197, Glu-319, and 345–348 (GGDT).

Belongs to the phosphoglycerate kinase family. In terms of assembly, monomer.

The protein localises to the cytoplasm. The enzyme catalyses (2R)-3-phosphoglycerate + ATP = (2R)-3-phospho-glyceroyl phosphate + ADP. Its pathway is carbohydrate degradation; glycolysis; pyruvate from D-glyceraldehyde 3-phosphate: step 2/5. In Legionella pneumophila (strain Lens), this protein is Phosphoglycerate kinase.